Consider the following 65-residue polypeptide: UPF0434 protein BBta_0300 (65 aa).

It belongs to the UPF0434 family.

The polypeptide is UPF0434 protein BBta_0300 (Bradyrhizobium sp. (strain BTAi1 / ATCC BAA-1182)).